Reading from the N-terminus, the 376-residue chain is Carbamoyl phosphate synthase small chain (376 aa).

The interval 1–187 is CPSase; it reads MKALLALEDG…KEDGSFLWKQ (187 aa). Serine 45, glycine 239, and glycine 241 together coordinate L-glutamine. In terms of domain architecture, Glutamine amidotransferase type-1 spans 189-376; that stretch reads KIPLIVYDYG…KEVVLLKLGC (188 aa). Catalysis depends on cysteine 266, which acts as the Nucleophile. Residues leucine 267, glutamine 270, asparagine 308, glycine 310, and phenylalanine 311 each coordinate L-glutamine. Residues histidine 349 and glutamate 351 contribute to the active site.

Belongs to the CarA family. As to quaternary structure, composed of two chains; the small (or glutamine) chain promotes the hydrolysis of glutamine to ammonia, which is used by the large (or ammonia) chain to synthesize carbamoyl phosphate. Tetramer of heterodimers (alpha,beta)4.

It carries out the reaction hydrogencarbonate + L-glutamine + 2 ATP + H2O = carbamoyl phosphate + L-glutamate + 2 ADP + phosphate + 2 H(+). The enzyme catalyses L-glutamine + H2O = L-glutamate + NH4(+). Its pathway is amino-acid biosynthesis; L-arginine biosynthesis; carbamoyl phosphate from bicarbonate: step 1/1. The protein operates within pyrimidine metabolism; UMP biosynthesis via de novo pathway; (S)-dihydroorotate from bicarbonate: step 1/3. Small subunit of the glutamine-dependent carbamoyl phosphate synthetase (CPSase). CPSase catalyzes the formation of carbamoyl phosphate from the ammonia moiety of glutamine, carbonate, and phosphate donated by ATP, constituting the first step of 2 biosynthetic pathways, one leading to arginine and/or urea and the other to pyrimidine nucleotides. The small subunit (glutamine amidotransferase) binds and cleaves glutamine to supply the large subunit with the substrate ammonia. The chain is Carbamoyl phosphate synthase small chain from Lawsonia intracellularis (strain PHE/MN1-00).